The following is a 315-amino-acid chain: Probable diguanylate cyclase DgcF (315 aa).

A run of 4 helical transmembrane segments spans residues 10 to 30 (FSTGVLIVPCMLTLAIPGVLP), 41 to 61 (IALIVSVIASVVIGGAGSLAF), 80 to 100 (LLTFVTGAVEIVLVANSVIDI), and 116 to 136 (LGIATMAICPIMVSFSVAAIN). In terms of domain architecture, GGDEF spans 173–310 (QHLTVMLLDI…GRNRTSTMRY (138 aa)). Residues Asp181 and Ile182 each coordinate Mg(2+). 3 residues coordinate substrate: Asn189, His194, and Asp198. Glu224 provides a ligand contact to Mg(2+).

As to quaternary structure, homodimer. It depends on Mg(2+) as a cofactor.

The protein resides in the cell membrane. The enzyme catalyses 2 GTP = 3',3'-c-di-GMP + 2 diphosphate. Its pathway is purine metabolism; 3',5'-cyclic di-GMP biosynthesis. Its function is as follows. Catalyzes the synthesis of cyclic-di-GMP (c-di-GMP) via the condensation of 2 GTP molecules. The protein is Probable diguanylate cyclase DgcF of Escherichia coli (strain K12).